A 197-amino-acid polypeptide reads, in one-letter code: ATP-dependent Clp protease proteolytic subunit (197 aa).

The active-site Nucleophile is the serine 98. Histidine 123 is a catalytic residue.

The protein belongs to the peptidase S14 family. Fourteen ClpP subunits assemble into 2 heptameric rings which stack back to back to give a disk-like structure with a central cavity, resembling the structure of eukaryotic proteasomes.

It localises to the cytoplasm. The enzyme catalyses Hydrolysis of proteins to small peptides in the presence of ATP and magnesium. alpha-casein is the usual test substrate. In the absence of ATP, only oligopeptides shorter than five residues are hydrolyzed (such as succinyl-Leu-Tyr-|-NHMec, and Leu-Tyr-Leu-|-Tyr-Trp, in which cleavage of the -Tyr-|-Leu- and -Tyr-|-Trp bonds also occurs).. Functionally, cleaves peptides in various proteins in a process that requires ATP hydrolysis. Has a chymotrypsin-like activity. Plays a major role in the degradation of misfolded proteins. This chain is ATP-dependent Clp protease proteolytic subunit, found in Natranaerobius thermophilus (strain ATCC BAA-1301 / DSM 18059 / JW/NM-WN-LF).